We begin with the raw amino-acid sequence, 446 residues long: Phosphoglucosamine mutase (446 aa).

Serine 101 (phosphoserine intermediate) is an active-site residue. Mg(2+) contacts are provided by serine 101, aspartate 240, aspartate 242, and aspartate 244. Position 101 is a phosphoserine (serine 101).

It belongs to the phosphohexose mutase family. Mg(2+) is required as a cofactor. Activated by phosphorylation.

The enzyme catalyses alpha-D-glucosamine 1-phosphate = D-glucosamine 6-phosphate. Catalyzes the conversion of glucosamine-6-phosphate to glucosamine-1-phosphate. The protein is Phosphoglucosamine mutase of Pseudomonas putida (strain ATCC 700007 / DSM 6899 / JCM 31910 / BCRC 17059 / LMG 24140 / F1).